The sequence spans 136 residues: Group 1 truncated hemoglobin GlbN (136 aa).

H81 provides a ligand contact to heme.

This sequence belongs to the truncated hemoglobin family. Group I subfamily. Homodimer. It depends on heme as a cofactor.

Binds oxygen cooperatively with very high affinity because of a fast combination and a slow dissociation rate. This chain is Group 1 truncated hemoglobin GlbN (glbN), found in Mycolicibacterium paratuberculosis (strain ATCC BAA-968 / K-10) (Mycobacterium paratuberculosis).